A 506-amino-acid polypeptide reads, in one-letter code: MVTLNKVDIESEEYKQMLNDYSTYTSTFASGFISNMFSNGIVTEIEAEQLKNYFSNPDEFQEEIEDLAQYFYISTAEIHQLFELIEALPTLNYKIDSFNKVKSSDKHISLLNKSLHKVKHKRLTRDLLKQVATAGTLVGIWLGDAKSPYPFIFDEIKYVFPSFRRNGDWVCVVDMELFTKYKDDQRNELLKSLSPYIKQSDYENFMKDREKYRFKELPQERTFPLRTGTLKRNQGLGTSWVTPGLYDVLHKKKLKDVERSIANKIINAVAVLTIGTDKGNGEYTNMKLPKAVKQKIHGGVKTALEKNQKDGVTVVSIPDFADINFPDVKADGLDGAKFDHINSDIQSAYGLSGSLLNGDGGNYATSSLNLDTFYKRIGVLMEDIEQEVYQKLFNLVLPAAQKDNYYMNYDKDKPLTLKEKMDILIKLNDKGWSIKHVVDNLAGVSWESYLEQTLYETEELKLQEKIRPYQTSYTFTGNEVGRPNEGNKNNDNTVKSATSNGNDNPI.

A disordered region spans residues 473-506 (YTFTGNEVGRPNEGNKNNDNTVKSATSNGNDNPI). Residues 486-506 (GNKNNDNTVKSATSNGNDNPI) are compositionally biased toward polar residues.

The chain is SPbeta prophage-derived uncharacterized protein YonE (yonE) from Bacillus subtilis (strain 168).